The primary structure comprises 605 residues: Vicilin GC72-A (605 aa).

The N-terminal stretch at Met-1–Cys-23 is a signal peptide. Disordered stretches follow at residues Thr-52–Gln-81 and Gly-157–Asn-181. Residues Glu-166–Glu-175 are compositionally biased toward acidic residues. Cupin type-1 domains lie at Tyr-183–Asp-341 and Phe-387–Asp-564. The interval Ser-465–Ser-485 is disordered.

This sequence belongs to the 7S seed storage protein family.

The protein resides in the vacuole. The protein localises to the aleurone grain. Functionally, seed storage protein. This is Vicilin GC72-A from Gossypium hirsutum (Upland cotton).